The chain runs to 2226 residues: Rotatin (2226 aa).

A disordered region spans residues 295–345; it reads ARGTHHSQNPSPGSSSPRPSVVGRTGQRPRGDGQDWDAASSSGSSSHAHVN. Low complexity-rich tracts occupy residues 304–318 and 332–343; these read PSPG…VVGR and AASSSGSSSHAH. At Ser310 the chain carries Phosphoserine. Position 811 is an N6-acetyllysine (Lys811). The disordered stretch occupies residues 1534-1554; the sequence is SRTSQDRDPSSLSTSETTVAP. The segment covering 1543-1554 has biased composition (polar residues); sequence SSLSTSETTVAP.

This sequence belongs to the rotatin family. Interacts with PPP1R35; this interaction allows the mutual recruitment to the centriole.

The protein localises to the cytoplasm. The protein resides in the cytoskeleton. Its subcellular location is the cilium basal body. It is found in the microtubule organizing center. It localises to the centrosome. Involved in the genetic cascade that governs left-right specification. Plays a role in the maintenance of a normal ciliary structure. Required for correct asymmetric expression of NODAL, LEFTY and PITX2. This is Rotatin from Homo sapiens (Human).